A 377-amino-acid polypeptide reads, in one-letter code: Alanine racemase (377 aa).

The Proton acceptor; specific for D-alanine role is filled by Lys37. Lys37 bears the N6-(pyridoxal phosphate)lysine mark. Arg135 contacts substrate. Residue Tyr271 is the Proton acceptor; specific for L-alanine of the active site. Met319 is a substrate binding site.

This sequence belongs to the alanine racemase family. Requires pyridoxal 5'-phosphate as cofactor.

The enzyme catalyses L-alanine = D-alanine. Its pathway is amino-acid biosynthesis; D-alanine biosynthesis; D-alanine from L-alanine: step 1/1. Functionally, catalyzes the interconversion of L-alanine and D-alanine. May also act on other amino acids. This is Alanine racemase (alr) from Helicobacter acinonychis (strain Sheeba).